Consider the following 137-residue polypeptide: Large-conductance mechanosensitive channel (137 aa).

2 helical membrane passes run 9-29 (AFAV…GAAF) and 79-99 (IQTI…VKAI).

It belongs to the MscL family. As to quaternary structure, homopentamer.

The protein localises to the cell inner membrane. Functionally, channel that opens in response to stretch forces in the membrane lipid bilayer. May participate in the regulation of osmotic pressure changes within the cell. This chain is Large-conductance mechanosensitive channel, found in Pseudomonas aeruginosa (strain UCBPP-PA14).